A 1399-amino-acid chain; its full sequence is DNA-directed RNA polymerase subunit beta' (1399 aa).

Residues cysteine 70, cysteine 72, cysteine 85, and cysteine 88 each contribute to the Zn(2+) site. Aspartate 460, aspartate 462, and aspartate 464 together coordinate Mg(2+). Cysteine 814, cysteine 888, cysteine 895, and cysteine 898 together coordinate Zn(2+). The segment at 1367 to 1399 (SERKRQRDLGKPQRVSASEAEAALTEALNSSGN) is disordered. Residues 1382-1399 (SASEAEAALTEALNSSGN) are compositionally biased toward low complexity.

It belongs to the RNA polymerase beta' chain family. In terms of assembly, the RNAP catalytic core consists of 2 alpha, 1 beta, 1 beta' and 1 omega subunit. When a sigma factor is associated with the core the holoenzyme is formed, which can initiate transcription. It depends on Mg(2+) as a cofactor. Requires Zn(2+) as cofactor.

The enzyme catalyses RNA(n) + a ribonucleoside 5'-triphosphate = RNA(n+1) + diphosphate. DNA-dependent RNA polymerase catalyzes the transcription of DNA into RNA using the four ribonucleoside triphosphates as substrates. This is DNA-directed RNA polymerase subunit beta' from Pseudomonas aeruginosa (strain UCBPP-PA14).